A 373-amino-acid chain; its full sequence is SWI/SNF-related matrix-associated actin-dependent regulator of chromatin subfamily B member 1 (373 aa).

The interval 1-101 (MALSKAFGQK…DEKYKAVSIS (101 aa)) is DNA-binding.

The protein belongs to the SNF5 family. Component of the multiprotein chromatin-remodeling complexes SWI/SNF. Component of neural progenitors-specific chromatin remodeling complex (npBAF complex) and the neuron-specific chromatin remodeling complex (nBAF complex). Component of the BAF (SWI/SNF) chromatin remodeling complex. Component of the SWI/SNF-B (PBAF) chromatin remodeling complex. Binds to double-stranded DNA.

Its subcellular location is the nucleus. Its function is as follows. Involved in chromatin-remodeling. Core component of the BAF (SWI/SNF) complex. This ATP-dependent chromatin-remodeling complex plays important roles in cell proliferation and differentiation, in cellular antiviral activities and inhibition of tumor formation. Belongs to the neural progenitors-specific chromatin remodeling complex (npBAF complex) and the neuron-specific chromatin remodeling complex (nBAF complex) and may play a role in neural development. This chain is SWI/SNF-related matrix-associated actin-dependent regulator of chromatin subfamily B member 1 (smarcb1), found in Dichotomyctere fluviatilis (Green pufferfish).